Here is a 300-residue protein sequence, read N- to C-terminus: tRNA dimethylallyltransferase (300 aa).

9-16 is an ATP binding site; sequence GPTASGKT. Position 11–16 (11–16) interacts with substrate; the sequence is TASGKT. The segment at 34–37 is interaction with substrate tRNA; the sequence is DSQQ.

This sequence belongs to the IPP transferase family. In terms of assembly, monomer. The cofactor is Mg(2+).

The enzyme catalyses adenosine(37) in tRNA + dimethylallyl diphosphate = N(6)-dimethylallyladenosine(37) in tRNA + diphosphate. Functionally, catalyzes the transfer of a dimethylallyl group onto the adenine at position 37 in tRNAs that read codons beginning with uridine, leading to the formation of N6-(dimethylallyl)adenosine (i(6)A). This Anaeromyxobacter sp. (strain Fw109-5) protein is tRNA dimethylallyltransferase.